A 598-amino-acid chain; its full sequence is uncharacterized protein (598 aa).

Over residues 1-19 (MSVPLRFSTPSSSPSASDN) the composition is skewed to low complexity. Disordered regions lie at residues 1–54 (MSVP…MRPK), 139–176 (QKNQ…PNWK), and 194–279 (EAQL…ITMP). The Cytoplasmic portion of the chain corresponds to 1–313 (MSVPLRFSTP…CKIRHFFREG (313 aa)). The span at 30-48 (ELDTFNTTDVPRRVNTTKA) shows a compositional bias: polar residues. Over residues 147–165 (RANSRVNSRANSRANSSVS) the composition is skewed to low complexity. Polar residues-rich tracts occupy residues 218-242 (FSLQ…SSAI) and 255-276 (PRNN…SQDI). The helical transmembrane segment at 314–334 (FAEFLGTLVLVVFGVGSNLQA) threads the bilayer. Residues 335 to 346 (TVTNGAGGSFES) are Extracellular-facing. The chain crosses the membrane as a helical span at residues 347–367 (LSFAWGFGCMLGVYIAGGISG). At 368–388 (GHVNPAVTISLAIFRKFPWYK) the chain is on the cytoplasmic side. The NPA 1 motif lies at 371-373 (NPA). Residues 389–409 (VPIYIFFQIWGAFFGGALAYG) form a helical membrane-spanning segment. The Extracellular portion of the chain corresponds to 410-444 (YHWSSITEFEGGKDIRTPATGGCLYTNPKPYVTWR). A helical membrane pass occupies residues 445 to 465 (NAFFDEFIGTAVLVGCLFAIL). The Cytoplasmic segment spans residues 466–473 (DDTNSPPT). A helical transmembrane segment spans residues 474 to 494 (QGMTAFIVGLLIAAIGMALGY). At 495-532 (QTSFTLNPARDLGPRMFAWWIGYGPHSFHLYHWWWTWG) the chain is on the extracellular side. Positions 501-503 (NPA) match the NPA 2 motif. Residues 533–553 (AWGGTIGGGIAGGLIYDLVIF) traverse the membrane as a helical segment. The Cytoplasmic portion of the chain corresponds to 554-598 (TGPESPLNYPDNGFIDKKVHQITAKFEKEEEVENLEKTDSPIENN).

This sequence belongs to the MIP/aquaporin (TC 1.A.8) family.

The protein localises to the membrane. This is an uncharacterized protein from Schizosaccharomyces pombe (strain 972 / ATCC 24843) (Fission yeast).